We begin with the raw amino-acid sequence, 164 residues long: 17.8 kDa heat shock protein (164 aa).

Residues 20 to 154 (VVAGEARPPM…HAGNGKAAGD (135 aa)) form the sHSP domain. Residues 68–93 (GEHEDANNAAKAGKASGEEEEENDGV) are disordered.

This sequence belongs to the small heat shock protein (HSP20) family. In terms of assembly, may form oligomeric structures.

Its subcellular location is the cytoplasm. The chain is 17.8 kDa heat shock protein (HSP17.8) from Oryza sativa subsp. japonica (Rice).